Consider the following 219-residue polypeptide: Ribose-5-phosphate isomerase A (219 aa).

Substrate-binding positions include 28-31 (SGST), 81-84 (DGAD), and 94-97 (KGGG). The Proton acceptor role is filled by glutamate 103. Substrate is bound at residue lysine 121.

Belongs to the ribose 5-phosphate isomerase family. In terms of assembly, homodimer.

The catalysed reaction is aldehydo-D-ribose 5-phosphate = D-ribulose 5-phosphate. The protein operates within carbohydrate degradation; pentose phosphate pathway; D-ribose 5-phosphate from D-ribulose 5-phosphate (non-oxidative stage): step 1/1. Its function is as follows. Catalyzes the reversible conversion of ribose-5-phosphate to ribulose 5-phosphate. The protein is Ribose-5-phosphate isomerase A of Actinobacillus pleuropneumoniae serotype 5b (strain L20).